Reading from the N-terminus, the 302-residue chain is Merozoite surface protein 2 (302 aa).

A signal peptide spans 1–20 (MKVIKTLSIINFFIFVTFNI). Asn-22 and Asn-36 each carry an N-linked (GlcNAc...) asparagine glycan. The segment at 44–228 (EESKPPTGAV…EQTESPELQS (185 aa)) is polymorphic region. The 1; partial repeat unit spans residues 55 to 60 (GSGAGA). Residues 55–113 (GSGAGAGSGAGAVAGSGAGAVAGSGAGAVAGSGAGAVAGSGAGAVAGSGAGAVAGSGAG) are 8 X 8 AA tandem repeats of G-S-G-A-G-A-V-A. A run of 6 repeats spans residues 61–68 (GSGAGAVA), 69–76 (GSGAGAVA), 77–84 (GSGAGAVA), 85–92 (GSGAGAVA), 93–100 (GSGAGAVA), and 101–108 (GSGAGAVA). An 8; partial repeat occupies 109–113 (GSGAG). The interval 114–263 (NGANPGADAE…DSQKECTDGN (150 aa)) is disordered. Positions 125–150 (SPSTPATTTTTTTTNDAEASTSTSSE) are enriched in low complexity. Residues 151–167 (NRNHNNAETNPKGKGEV) show a composition bias toward basic and acidic residues. 2 stretches are compositionally biased toward polar residues: residues 169 to 195 (KPNQ…NVPR) and 202 to 230 (KSPT…QSAP). Asn-179 is a glycosylation site (N-linked (GlcNAc...) asparagine). Asn-251 carries N-linked (GlcNAc...) asparagine glycosylation. Residues Cys-259 and Cys-267 are joined by a disulfide bond. Asn-275 and Asn-276 each carry an N-linked (GlcNAc...) asparagine glycan. Asn-276 carries the GPI-anchor amidated asparagine lipid modification. Positions 277–302 (SSNIASINKFVVLISATLVLSFAIFI) are cleaved as a propeptide — removed in mature form.

The protein resides in the cell membrane. May play a role in the merozoite attachment to the erythrocyte. The chain is Merozoite surface protein 2 from Plasmodium falciparum (isolate tak 9).